A 445-amino-acid polypeptide reads, in one-letter code: Scarecrow-like protein 18 (445 aa).

The segment covering 1–21 (MLTSFKSSSSSSEDATATTTE) has biased composition (low complexity). Residues 1–26 (MLTSFKSSSSSSEDATATTTENPPPL) form a disordered region. The GRAS domain occupies 32 to 445 (SAATSASHHL…RPLFSVSSWK (414 aa)). A leucine repeat I (LRI) region spans residues 39–127 (HHLRRLLFTA…STVFTSSVCK (89 aa)). The segment at 146–217 (YLWLNQLTPF…SPPPSLRITG (72 aa)) is VHIID. Positions 179-183 (LHILD) match the VHIID motif. The segment at 227-259 (RTGDRLTRFADSLGLQFQFHTLVIVEEDLAGLL) is leucine repeat II (LRII). A PFYRE region spans residues 275 to 366 (IAVNCVHFLH…QRWFGKEILD (92 aa)). The SAW stretch occupies residues 369 to 445 (AAEETERKQR…RPLFSVSSWK (77 aa)).

Belongs to the GRAS family. Expressed in roots and flowers.

It is found in the nucleus. Probable transcription factor required for axillary (lateral) shoot meristem formation during vegetative development. Seems to act upstream of REVOLUTA. This is Scarecrow-like protein 18 (SCL18) from Arabidopsis thaliana (Mouse-ear cress).